The sequence spans 97 residues: Signal recognition particle 19 kDa protein (97 aa).

This sequence belongs to the SRP19 family. As to quaternary structure, part of the signal recognition particle protein translocation system, which is composed of SRP and FtsY. Archaeal SRP consists of a 7S RNA molecule of 300 nucleotides and two protein subunits: SRP54 and SRP19.

Its subcellular location is the cytoplasm. Involved in targeting and insertion of nascent membrane proteins into the cytoplasmic membrane. Binds directly to 7S RNA and mediates binding of the 54 kDa subunit of the SRP. The chain is Signal recognition particle 19 kDa protein from Methanocella arvoryzae (strain DSM 22066 / NBRC 105507 / MRE50).